The primary structure comprises 428 residues: Glutamate-1-semialdehyde 2,1-aminomutase 1 (428 aa).

Position 268 is an N6-(pyridoxal phosphate)lysine (K268).

This sequence belongs to the class-III pyridoxal-phosphate-dependent aminotransferase family. HemL subfamily. As to quaternary structure, homodimer. Pyridoxal 5'-phosphate serves as cofactor.

It is found in the cytoplasm. The enzyme catalyses (S)-4-amino-5-oxopentanoate = 5-aminolevulinate. It participates in porphyrin-containing compound metabolism; protoporphyrin-IX biosynthesis; 5-aminolevulinate from L-glutamyl-tRNA(Glu): step 2/2. The sequence is that of Glutamate-1-semialdehyde 2,1-aminomutase 1 from Geobacillus kaustophilus (strain HTA426).